The primary structure comprises 166 residues: uncharacterized protein (166 aa).

This is an uncharacterized protein from Homo sapiens (Human).